A 207-amino-acid chain; its full sequence is Urease accessory protein UreG (207 aa).

Residue glycine 12–threonine 19 participates in GTP binding.

Belongs to the SIMIBI class G3E GTPase family. UreG subfamily. As to quaternary structure, homodimer. UreD, UreF and UreG form a complex that acts as a GTP-hydrolysis-dependent molecular chaperone, activating the urease apoprotein by helping to assemble the nickel containing metallocenter of UreC. The UreE protein probably delivers the nickel.

It is found in the cytoplasm. In terms of biological role, facilitates the functional incorporation of the urease nickel metallocenter. This process requires GTP hydrolysis, probably effectuated by UreG. The protein is Urease accessory protein UreG of Cereibacter sphaeroides (strain ATCC 17029 / ATH 2.4.9) (Rhodobacter sphaeroides).